Reading from the N-terminus, the 259-residue chain is Putative protein-disulfide oxidoreductase RBE_1288 (259 aa).

A signal peptide spans M1–E20. The interval V25–P54 is disordered. Polar residues predominate over residues I33–D42. The segment covering E43–P54 has biased composition (low complexity). A Thioredoxin domain is found at Q47–E251. Cysteines 104 and 107 form a disulfide.

It belongs to the thioredoxin family. DsbA subfamily.

The protein resides in the periplasm. May be required for disulfide bond formation in some proteins. In Rickettsia bellii (strain RML369-C), this protein is Putative protein-disulfide oxidoreductase RBE_1288.